The sequence spans 358 residues: Neutral protease 2 homolog MGYG_02351 (358 aa).

A signal peptide spans 1-17; the sequence is MQFVALLAALGAPLALA. Positions 18–183 are excised as a propeptide; sequence ASIPAAHNNS…DSPAGVIDKR (166 aa). Cystine bridges form between Cys191/Cys260 and Cys267/Cys285. His309 is a Zn(2+) binding site. Glu310 is a catalytic residue. Zn(2+) contacts are provided by His313 and Asp324.

This sequence belongs to the peptidase M35 family. It depends on Zn(2+) as a cofactor.

The protein localises to the secreted. The catalysed reaction is Preferential cleavage of bonds with hydrophobic residues in P1'. Also 3-Asn-|-Gln-4 and 8-Gly-|-Ser-9 bonds in insulin B chain.. In terms of biological role, secreted metalloproteinase that allows assimilation of proteinaceous substrates. Shows high activities on basic nuclear substrates such as histone and protamine. May be involved in virulence. The protein is Neutral protease 2 homolog MGYG_02351 of Arthroderma gypseum (strain ATCC MYA-4604 / CBS 118893) (Microsporum gypseum).